We begin with the raw amino-acid sequence, 953 residues long: MVAAPCARRLARRSHSALLAALMVLLLHTLVVWNFSSLDSGAGEQRRAGAAAGAAEQQQPAAPRRERRDLAAHLPAARGGPGGRAGGGGARGGGPGGARAQQPASRGALASRARDPQPSPLITLETQDGYFSHRPKEKVRTDSNNENSVPKDFENVDNSNFAPRTQKQKHQPELAKKPPSRQKEHLQRKLDALDKRQGQSVLGKGPKEVLPPREKATGNSSQGKDLSRHSHARKSGGGGSPETKSDQAPKCDISGKEAISALTRAKSKHCRQEIAETYCRHKLGLLMPEKVARFCPLKGKAHKNVQWDEDAVEYMPANPVRIAFVLVVHGRAFRQFQRMSKAIYHKDHFYYIHVDKRSNYLHRQGLQFSRQYENVRVTSWKMATIWGGASFLSTYLQSMRDLLEMTDWPWDFFINLSAADYPIRTNDQLVAFLSRYRDMNFLKSHGRDNARFIRKQGLDRLFLECDTHMWRLGDRRIPEGIAVDGGSDWFLLNRKFVEYVAFSTDDLVTKMKQFYSYTLLPAESFFHTVLENSPHCDTMVDNNLRITNWNRKLGCKCQYKHIVDWCGCSPNDFKPQDFHRFQQTARPTFFARKFEAIVNQEIIGQLDSYLSGNFPAGTPGLRSYWEKLYDQSAPLRSLSDVALTMYHSFIRLGLRRAESSLHTDGENSCRYYPMGHPVSVHFYFLADRFQGFLIKHHVTNLAVSKLETLETWMMPKEVFKVASPPSDFGRLQFSEVGTDWDAKERLFRNFGGLLGPMDEPVGMQKWGKGPNVTVTVIWVDPVNVITATYDILIESTAEFTHYKPPLNLPLRPGVWTVKILHHWVPVAETKFLVAPLTFSNKQPIKPEEALKLHNGPPRSAYMEQSFQSLNPVLSLHINPAQVEQARKNAAFTGTALEAWLDSLVGGTWTAMDICTTGPTACPVMQTCSQTAWSSFSPDPKSELGAVKPDGRLR.

The Cytoplasmic segment spans residues M1 to A17. A helical; Signal-anchor for type II membrane protein membrane pass occupies residues L18–L38. The Lumenal portion of the chain corresponds to D39–R953. A compositionally biased stretch (low complexity) spans A48–A62. Disordered stretches follow at residues A48 to R67 and L74 to C251. Positions G79–G97 are enriched in gly residues. The span at K138–E154 shows a compositional bias: basic and acidic residues. A compositionally biased stretch (polar residues) spans V156 to T165. Basic and acidic residues-rich tracts occupy residues H170–Q197 and G205–A216. Residue N219 is glycosylated (N-linked (GlcNAc...) asparagine). 4 cysteine pairs are disulfide-bonded: C251–C279, C295–C536, C555–C568, and C557–C566. UDP-alpha-D-xylose is bound by residues V327, D355, and T384–W386. N415 carries N-linked (GlcNAc...) asparagine glycosylation. D488–W489 contacts UDP-alpha-D-xylose. UDP-alpha-D-xylose contacts are provided by residues S569 and R592–K593. Cystine bridges form between C669–C921 and C914–C927. N-linked (GlcNAc...) asparagine glycosylation occurs at N771. Residues S933–R953 form a disordered region.

The protein belongs to the glycosyltransferase 14 family. XylT subfamily. Monomer. A divalent metal cation is required as a cofactor. In terms of processing, contains 7 disulfide bonds. N-glycosylated. As to expression, detected in brain, spleen, kidney and testis, and at low levels in skeletal muscle.

The protein resides in the golgi apparatus membrane. The catalysed reaction is UDP-alpha-D-xylose + L-seryl-[protein] = 3-O-(beta-D-xylosyl)-L-seryl-[protein] + UDP + H(+). It participates in glycan metabolism; chondroitin sulfate biosynthesis. The protein operates within glycan metabolism; heparan sulfate biosynthesis. Catalyzes the first step in the biosynthesis of chondroitin sulfate and dermatan sulfate proteoglycans, such as DCN. Transfers D-xylose from UDP-D-xylose to specific serine residues of the core protein. Required for normal maturation of chondrocytes during bone development, normal onset of ossification and normal embryonic and postnatal skeleton development, especially of the long bones. In Mus musculus (Mouse), this protein is Xylosyltransferase 1 (Xylt1).